Here is a 737-residue protein sequence, read N- to C-terminus: Catalase-peroxidase (737 aa).

The tryptophyl-tyrosyl-methioninium (Trp-Tyr) (with M-251) cross-link spans 102-225 (WHSAGTYRTG…LGAVQMGLIY (124 aa)). The Proton acceptor role is filled by histidine 103. The segment at residues 225–251 (YVNPEGPNGKPDPLAAAHDIRETFARM) is a cross-link (tryptophyl-tyrosyl-methioninium (Tyr-Met) (with W-102)). Histidine 266 lines the heme b pocket.

It belongs to the peroxidase family. Peroxidase/catalase subfamily. Homodimer or homotetramer. Requires heme b as cofactor. Formation of the three residue Trp-Tyr-Met cross-link is important for the catalase, but not the peroxidase activity of the enzyme.

It carries out the reaction H2O2 + AH2 = A + 2 H2O. The catalysed reaction is 2 H2O2 = O2 + 2 H2O. Bifunctional enzyme with both catalase and broad-spectrum peroxidase activity. The sequence is that of Catalase-peroxidase from Caulobacter sp. (strain K31).